Consider the following 237-residue polypeptide: MAKSNNVYVVNGEEKVSTLAEVAKVLGVSRVSKKDVEEGKYDVVVEEAAVSLADTEEVVEEVVTEEEDILEGVEVVEDEEEEEAAEDVEEPTSEEDSEDEWEEGYPVATEVEEDEDEEIEYPEVGDFEDEKAIKKYIKGLTDEQLQAWCELEGAEWVENEHRNINRMRMAMAIKAVHFPELAKKPSSKKKSKYAEYTTEELVEMAIDNNVEVRDDKGNERILRMYTIIALREAGLIS.

The span at 73-103 (VEVVEDEEEEEAAEDVEEPTSEEDSEDEWEE) shows a compositional bias: acidic residues. The interval 73–105 (VEVVEDEEEEEAAEDVEEPTSEEDSEDEWEEGY) is disordered.

In terms of biological role, hypothesized to function in the shutoff of host biosyntheses. But it seems dispensable both for host shutoff and for phage multiplication. Its shutoff function is probably not entirely specific to host activities. The sequence is that of E3 protein (44) from Bacillus phage SP01 (Bacteriophage SP01).